Reading from the N-terminus, the 206-residue chain is Large ribosomal subunit protein uL13y (206 aa).

Belongs to the universal ribosomal protein uL13 family.

The polypeptide is Large ribosomal subunit protein uL13y (RPL13AB) (Arabidopsis thaliana (Mouse-ear cress)).